A 328-amino-acid polypeptide reads, in one-letter code: tRNA U34 carboxymethyltransferase (328 aa).

Carboxy-S-adenosyl-L-methionine contacts are provided by residues K91, W105, K110, G130, 152–154, M196, Y200, and R315; that span reads DPS.

Belongs to the class I-like SAM-binding methyltransferase superfamily. CmoB family. In terms of assembly, homotetramer.

The catalysed reaction is carboxy-S-adenosyl-L-methionine + 5-hydroxyuridine(34) in tRNA = 5-carboxymethoxyuridine(34) in tRNA + S-adenosyl-L-homocysteine + H(+). Catalyzes carboxymethyl transfer from carboxy-S-adenosyl-L-methionine (Cx-SAM) to 5-hydroxyuridine (ho5U) to form 5-carboxymethoxyuridine (cmo5U) at position 34 in tRNAs. The polypeptide is tRNA U34 carboxymethyltransferase (Psychromonas ingrahamii (strain DSM 17664 / CCUG 51855 / 37)).